A 425-amino-acid polypeptide reads, in one-letter code: Orexin/Hypocretin receptor type 1 (425 aa).

The segment at 1-25 is disordered; that stretch reads MEPSATPGPQMGVPTEGRERSPEPP. The Extracellular segment spans residues 1–46; it reads MEPSATPGPQMGVPTEGRERSPEPPDYEDEFLRYLWRDYLYPKQYE. A required for response to orexin-A region spans residues 26–41; it reads DYEDEFLRYLWRDYLY. Residues 47–67 traverse the membrane as a helical segment; sequence WVLIAAYVAVFFVALVGNTLV. The Cytoplasmic portion of the chain corresponds to 68-82; the sequence is CLAVWRNHHMRTVTN. The chain crosses the membrane as a helical span at residues 83-105; it reads YFIVNLSLADVLVTAICLPASLL. At 106-119 the chain is on the extracellular side; sequence VDITESWLFGHALC. Residues Cys-119 and Cys-202 are joined by a disulfide bond. A helical membrane pass occupies residues 120–140; that stretch reads KVIPYLQAVSVSVAVLTLSFI. Over 141–160 the chain is Cytoplasmic; it reads ALDRWYAICHPLLFKSTARR. Residues 161–182 traverse the membrane as a helical segment; that stretch reads ARGSILGIWAVSLAVMVPQAAV. The Extracellular segment spans residues 183 to 213; that stretch reads MECSSVLPELANRTRLFSVCDERWADDLYPK. An N-linked (GlcNAc...) asparagine glycan is attached at Asn-194. Residues 214-235 form a helical membrane-spanning segment; that stretch reads IYHSCFFIVTYLAPLGLMAMAY. Over 236–298 the chain is Cytoplasmic; it reads FQIFRKLWGR…QMRARRKTAK (63 aa). Residues 299–321 traverse the membrane as a helical segment; sequence MLMVVLLVFALCYLPISVLNVLK. Residues 322–336 lie on the Extracellular side of the membrane; sequence RVFGMFRQASDREAV. The helical transmembrane segment at 337–360 threads the bilayer; it reads YACFTFSHWLVYANSAANPIIYNF. At 361 to 425 the chain is on the cytoplasmic side; it reads LSGKFREQFK…LLTSVTTVLP (65 aa).

This sequence belongs to the G-protein coupled receptor 1 family.

Its subcellular location is the cell membrane. Functionally, moderately selective excitatory receptor for orexin-A and, with a lower affinity, for orexin-B neuropeptide. Triggers an increase in cytoplasmic Ca(2+) levels in response to orexin-A binding. The chain is Orexin/Hypocretin receptor type 1 from Bos taurus (Bovine).